A 752-amino-acid polypeptide reads, in one-letter code: MWNAQQDSDSAEALGRRQRWFCAGTLVLAFTGTFIIGFLFGWFIKPSNDSTSSVSYPGMKKAFLQELKAENIKKFLYNFTRTPHLAGTQHNFELAKQIHAQWKEFGLDLVELSDYDVLLSYPNKTHPNYISIINEDGNEIFKTSLAELSPPGYENISDVVPPYSAFSPQGTPEGDLVYVNYARTEDFFKLERVMKINCSGKIVIARYGQVFRGNKVKNAQLAGAKGIILYSDPADYFVPGVKSYPDGWNLPGGGVQRGNVLNLNGAGDPLTPGYPANEYAYRHEFTEAVGLPSIPVHPIGYDDAQKLLEHMGGSAPPDSSWKGGLKVPYNVGPGFAGNFSKQKVKLHIHSYNKVTRIYNVIGTLKGAVEPDRYVILGGHRDAWVFGGIDPQSGAAVVHEIVRTFGTLKKKGWRPRRTILFASWDAEEFGLLGSTEWAEEHSRLLQERGVAYINADSSIEGNYTLRVDCTPLMHSLVYNLTKELPSPDEGFEGKSLYDSWKEKSPSTEFIGMPRISKLGSGNDFEVFFQRLGIASGRARYTKNWKNNKVSSYPLYHSVYETYELVEKFYDPTFKYHLTVAQVRGAMVFELANSIVLPFDCQSYAVALKKHAETIYNISMNHPQEMKAYMISFDSLFSAVNNFTDVASKFNQRLQDLDKSNPILLRILNDQLMYLERAFIDPLGLPGRPFYRHIIYAPSSHNKYAGESFPGIYDALFDINNKVDTSKAWREVKRQISIAAFTVQAAAETLREVD.

Residues 1–19 (MWNAQQDSDSAEALGRRQR) lie on the Cytoplasmic side of the membrane. Ser10 is subject to Phosphoserine. A helical; Signal-anchor for type II membrane protein membrane pass occupies residues 20-44 (WFCAGTLVLAFTGTFIIGFLFGWFI). Topologically, residues 45–752 (KPSNDSTSSV…AAAETLREVD (708 aa)) are extracellular. 5 N-linked (GlcNAc...) asparagine glycosylation sites follow: Asn48, Asn78, Asn123, Asn155, and Asn197. Substrate is bound by residues Arg212 and Asn259. 2 residues coordinate Ca(2+): Thr271 and Tyr274. Residues 276-589 (ANEYAYRHEF…QVRGAMVFEL (314 aa)) are NAALADase. N-linked (GlcNAc...) asparagine glycosylation is present at Asn338. Residues His379 and Asp389 each contribute to the Zn(2+) site. Residue Glu426 coordinates substrate. Glu426 acts as the Nucleophile; for NAALADase activity in catalysis. Glu427 serves as a coordination point for Zn(2+). Ca(2+) contacts are provided by Glu435 and Glu438. Asp455 provides a ligand contact to Zn(2+). N-linked (GlcNAc...) asparagine glycosylation is found at Asn461 and Asn478. Substrate is bound by residues 519-520 (SG), Asn521, 536-538 (RAR), Tyr554, and 554-555 (YH). His555 is a Zn(2+) binding site. Asn615 is a glycosylation site (N-linked (GlcNAc...) asparagine). The active-site Charge relay system is the Ser630. Asn640 is a glycosylation site (N-linked (GlcNAc...) asparagine). Active-site charge relay system residues include Asp668 and His691. 701 to 702 (KY) is a binding site for substrate.

Belongs to the peptidase M28 family. M28B subfamily. In terms of assembly, homodimer. Requires Zn(2+) as cofactor. As to expression, widely expressed throughout brain regions with highest levels in the hippocampus, dentate gyrus, priform cortex, choroid plexus of ventricles, pineal gland, anterior lobe of the pituitary gland and supraoptic nucleus. High levels also found in the cerebral cortex, substantia nigra, pontine nucleus and the granule cell layer of cerebellum. Highly expressed in astrocytes and non-myelinating Schwann cells. Also expressed in kidney, localizing to the proximal brush border of the renal tube.

It is found in the cell membrane. It carries out the reaction Release of an unsubstituted, C-terminal glutamyl residue, typically from Ac-Asp-Glu or folylpoly-gamma-glutamates.. The NAALADase activity is inhibited by beta-NAAG, quisqualic acid and 2-(phosphonomethyl)glutaric acid (PMG). In terms of biological role, has both folate hydrolase and N-acetylated-alpha-linked-acidic dipeptidase (NAALADase) activity. Has a preference for tri-alpha-glutamate peptides. In the intestine, required for the uptake of folate. In the brain, modulates excitatory neurotransmission through the hydrolysis of the neuropeptide, N-aceylaspartylglutamate (NAAG), thereby releasing glutamate. Also exhibits a dipeptidyl-peptidase IV type activity. In vitro, cleaves Gly-Pro-AMC. This chain is Glutamate carboxypeptidase 2 (Folh1), found in Rattus norvegicus (Rat).